The chain runs to 121 residues: Prefoldin subunit beta (121 aa).

The protein belongs to the prefoldin subunit beta family. As to quaternary structure, heterohexamer of two alpha and four beta subunits.

The protein resides in the cytoplasm. Molecular chaperone capable of stabilizing a range of proteins. Seems to fulfill an ATP-independent, HSP70-like function in archaeal de novo protein folding. The polypeptide is Prefoldin subunit beta (Methanoculleus marisnigri (strain ATCC 35101 / DSM 1498 / JR1)).